Consider the following 338-residue polypeptide: MQALMEDSKIKEEIWIEKYRPVRLNQVAGQDETIERLKSYVATKNLPHLLFSGPPGVGKTASAVSIAREIFGEDLWRENFTELNASDERGIDIVRNKIKNFAKTAPIGGAPFKIIFLDEADALTADAQSALRRTMERFSSNCRFILSCNYSSKIIEPIQSRCAVYRFRRLSDEAIKERLEYIAGDQGLSITEGGYEALIYVAQGDMRKAVNSLQAAAFIDTDKSISRETIYRTTATANPEEIKNLIETALRGNFRIARKELNRLLYEEGLSGEDIVGQIYRVVSEMDNLMVLDLGLTERDIVALVDVIGETDFRLTEGASEKIQLEALLAHFALSREN.

53–60 (GPPGVGKT) is an ATP binding site.

It belongs to the activator 1 small subunits family. RfcS subfamily. Heteromultimer composed of small subunits (RfcS) and large subunits (RfcL).

Its function is as follows. Part of the RFC clamp loader complex which loads the PCNA sliding clamp onto DNA. This Methanosarcina acetivorans (strain ATCC 35395 / DSM 2834 / JCM 12185 / C2A) protein is Replication factor C small subunit.